The chain runs to 153 residues: Cytochrome c-type biogenesis protein CcmE (153 aa).

Over 1–6 the chain is Cytoplasmic; it reads MNARRR. Residues 7–27 traverse the membrane as a helical; Signal-anchor for type II membrane protein segment; that stretch reads LWSVLMLILAVGTAATLTIMA. Topologically, residues 28–153 are periplasmic; it reads LRHNLTYLYM…LDTPIAETTP (126 aa). 2 residues coordinate heme: His121 and Tyr125. Residues 131–141 show a composition bias toward polar residues; it reads ANKMQPTPTQH. Positions 131–153 are disordered; it reads ANKMQPTPTQHTHLDTPIAETTP.

This sequence belongs to the CcmE/CycJ family.

It localises to the cell inner membrane. In terms of biological role, heme chaperone required for the biogenesis of c-type cytochromes. Transiently binds heme delivered by CcmC and transfers the heme to apo-cytochromes in a process facilitated by CcmF and CcmH. This is Cytochrome c-type biogenesis protein CcmE from Xylella fastidiosa (strain Temecula1 / ATCC 700964).